The sequence spans 352 residues: Trifunctional sesterterpene/triterpene/sesquarterpene synthase (352 aa).

It belongs to the large terpene synthase family.

It carries out the reaction (2E,6E,10E,14E)-geranylfarnesyl diphosphate = beta-geranylfarnesene + diphosphate. It catalyses the reaction all-trans-hexaprenyl diphosphate = beta-hexaprene + diphosphate. The enzyme catalyses all-trans-heptaprenyl diphosphate = beta-heptaprene + diphosphate. Its function is as follows. Catalyzes the conversion of geranylfarnesyl diphosphate (GFPP) and hexaprenyl diphosphate (HexPP) into beta-geranylfarnesene and beta-hexaprene, respectively. Also produces beta-heptaprene from heptaprenyl diphosphate (HepPP) as a minor product. The polypeptide is Trifunctional sesterterpene/triterpene/sesquarterpene synthase (Shouchella clausii (Alkalihalobacillus clausii)).